Consider the following 302-residue polypeptide: Putative S-adenosyl-L-methionine-dependent methyltransferase MAB_4586c (302 aa).

Residues D122 and 151–152 (DL) contribute to the S-adenosyl-L-methionine site.

It belongs to the UPF0677 family.

Exhibits S-adenosyl-L-methionine-dependent methyltransferase activity. This chain is Putative S-adenosyl-L-methionine-dependent methyltransferase MAB_4586c, found in Mycobacteroides abscessus (strain ATCC 19977 / DSM 44196 / CCUG 20993 / CIP 104536 / JCM 13569 / NCTC 13031 / TMC 1543 / L948) (Mycobacterium abscessus).